The chain runs to 165 residues: P2Y purinoceptor 4 (165 aa).

Residues 1 to 16 (SDTLYVLSLPTLVYYY) traverse the membrane as a helical segment. Residues 17-30 (AARNHWPFGTGFCK) are Extracellular-facing. Residues 31 to 51 (FVRFLFYWNLYCSVLFLTCIS) traverse the membrane as a helical segment. Topologically, residues 52-74 (VHRYMGICHPLRALRWGRPRFAS) are cytoplasmic. The helical transmembrane segment at 75–95 (LLCLAVWLVVAGCLVPNLFFV) threads the bilayer. The Extracellular portion of the chain corresponds to 96 to 124 (TTSPNGTTILCHDTTRPEEFDHYVHFSSA). N-linked (GlcNAc...) asparagine glycosylation occurs at Asn100. A helical membrane pass occupies residues 125-145 (VMVLLFGLPFLVTLVCYGLMA). Topologically, residues 146-165 (RRLYRPLPGAGQSSSRLRSL) are cytoplasmic.

The protein belongs to the G-protein coupled receptor 1 family.

The protein resides in the cell membrane. Receptor for UTP and UDP coupled to G-proteins that activate a phosphatidylinositol-calcium second messenger system. In Cricetulus griseus (Chinese hamster), this protein is P2Y purinoceptor 4 (P2RY4).